The following is a 521-amino-acid chain: Endoplasmic reticulum mannosyl-oligosaccharide 1,2-alpha-mannosidase (521 aa).

Over M1 to K8 the chain is Cytoplasmic. A helical; Signal-anchor for type II membrane protein membrane pass occupies residues Y9–V31. Residues Q32–V521 are Lumenal-facing. Residues N114, N167, N300, N342, and N378 are each glycosylated (N-linked (GlcNAc...) asparagine). A disulfide bridge connects residues C330 and C373. The active-site Proton donor is E387. The N-linked (GlcNAc...) asparagine glycan is linked to N499. T504 is a Ca(2+) binding site.

This sequence belongs to the glycosyl hydrolase 47 family. The cofactor is Ca(2+).

It is found in the membrane. The enzyme catalyses N(4)-(alpha-D-Man-(1-&gt;2)-alpha-D-Man-(1-&gt;2)-alpha-D-Man-(1-&gt;3)-[alpha-D-Man-(1-&gt;2)-alpha-D-Man-(1-&gt;3)-[alpha-D-Man-(1-&gt;2)-alpha-D-Man-(1-&gt;6)]-alpha-D-Man-(1-&gt;6)]-beta-D-Man-(1-&gt;4)-beta-D-GlcNAc-(1-&gt;4)-beta-D-GlcNAc)-L-asparaginyl-[protein] (N-glucan mannose isomer 9A1,2,3B1,2,3) + 4 H2O = N(4)-(alpha-D-Man-(1-&gt;3)-[alpha-D-Man-(1-&gt;3)-[alpha-D-Man-(1-&gt;6)]-alpha-D-Man-(1-&gt;6)]-beta-D-Man-(1-&gt;4)-beta-D-GlcNAc-(1-&gt;4)-beta-D-GlcNAc)-L-asparaginyl-[protein] (N-glucan mannose isomer 5A1,2) + 4 beta-D-mannose. It carries out the reaction N(4)-(alpha-D-Man-(1-&gt;2)-alpha-D-Man-(1-&gt;2)-alpha-D-Man-(1-&gt;3)-[alpha-D-Man-(1-&gt;3)-[alpha-D-Man-(1-&gt;2)-alpha-D-Man-(1-&gt;6)]-alpha-D-Man-(1-&gt;6)]-beta-D-Man-(1-&gt;4)-beta-D-GlcNAc-(1-&gt;4)-beta-D-GlcNAc)-L-asparaginyl-[protein] (N-glucan mannose isomer 8A1,2,3B1,3) + 3 H2O = N(4)-(alpha-D-Man-(1-&gt;3)-[alpha-D-Man-(1-&gt;3)-[alpha-D-Man-(1-&gt;6)]-alpha-D-Man-(1-&gt;6)]-beta-D-Man-(1-&gt;4)-beta-D-GlcNAc-(1-&gt;4)-beta-D-GlcNAc)-L-asparaginyl-[protein] (N-glucan mannose isomer 5A1,2) + 3 beta-D-mannose. It participates in protein modification; protein glycosylation. Inhibited by kifunensine. In terms of biological role, involved in glycoprotein quality control as it is important for the targeting of misfolded glycoproteins for degradation. It trims a single alpha-1,2-linked mannose residue from Man(9)GlcNAc(2) to produce Man(8)GlcNAc(2) with low efficiency. This is Endoplasmic reticulum mannosyl-oligosaccharide 1,2-alpha-mannosidase from Schizosaccharomyces pombe (strain 972 / ATCC 24843) (Fission yeast).